Consider the following 366-residue polypeptide: Cyclic amide hydrolase (366 aa).

The interval 1-103 is RU A; that stretch reads MKVGVHKLAM…TLFTRAPDDG (103 aa). Substrate contacts are provided by residues arginine 51 and 82 to 83; that span reads SG. Residues 110 to 247 are RU B; sequence RLALGIGITR…CEVLLFGNAP (138 aa). Lysine 160 is an active-site residue. Substrate-binding positions include arginine 192, 230–231, arginine 327, and 346–347; these read SA and SG. The active-site Nucleophile is serine 230. An RU C region spans residues 253-366; it reads FRIGHGVLKD…AAPIAAIVRA (114 aa).

The protein belongs to the cyclic amide hydrolase (CyAH) family. In terms of assembly, homotetramer.

In terms of biological role, cyclic amide hydrolase of unknown substrate specificity. Catalyzes the hydrolytic ring-opening of a cyclic amide. Does not act on cyanuric acid nor barbituric acid. This chain is Cyclic amide hydrolase, found in Azorhizobium caulinodans (strain ATCC 43989 / DSM 5975 / JCM 20966 / LMG 6465 / NBRC 14845 / NCIMB 13405 / ORS 571).